A 623-amino-acid polypeptide reads, in one-letter code: MPSTKRYQHVIETPEPGEWELSGYEAAVPITEKSNPLTRNLDKADAEKIVQLLGQCDAEIFQEEGQIMPTYQRLYSESVLTTMLQVAGKVQEVLKEPDGGLVVLSGGGTSGRMAFLMSVSFNQLMKGLGQKPLYTYLIAGGDRSVVASRERTEDSALHGIEELKKVAAGKKRVVVIGISVGLSAPFVAGQMDYCMDNTAVFLPVLVGFNPVSMARNDPIEDWRSTFRQVAERMQKMQEKQEAFVLNPAIGPEGLSGSSRMKGGSATKILLETLLLAAHKTVDQGVVSSQRCLLEILRTFERAHQVTYSQSSKIATLTKQVGISLEKKGHVHLVGWQTLGIIAIMDGVECIHTFGADFRDIRGFLIGDHNDMFNQKDELSNQGPQFTFSQDDFLTSVLPSLTEIDTVVFIFTLDDNLAEVQALAERVREKSWNIQALVHSTVGQSLPAPLKKLFPSLISITWPLLFFDYEGSYVQKFQRELSTKWVLNTVSTGAHVLLGKILQNHMLDLRIANSKLFWRALAMLQRFSGQSKARCIESLLQVIHFPQPLSNDVRAAPISCHVQVAHEKEKVIPTALLSLLLRCSITEAKERLAAASSVCEVVRSALSGPGQKRSIQAFGDPVVP.

SIS domains follow at residues 90–286 (VQEV…QGVV) and 320–476 (VGIS…VQKF). Residues 109–110 (TS), Glu153, and 179–181 (SVG) contribute to the beta-D-fructose 1-phosphate site. Position 109-110 (109-110 (TS)) interacts with beta-D-fructose 6-phosphate. Residue 179-181 (SVG) participates in beta-D-fructose 6-phosphate binding. The important for interaction with GCK stretch occupies residues 199–200 (AV). Glu348 serves as a coordination point for beta-D-fructose 1-phosphate. The interval 463 to 465 (LLF) is essential for interaction with GCK.

Belongs to the GCKR family. Interacts (fructose 6-phosphate bound form) with GCK.

It localises to the cytoplasm. The protein resides in the nucleus. Its subcellular location is the mitochondrion. In terms of biological role, regulates glucokinase (GCK) by forming an inactive complex with this enzyme. Acts by promoting GCK recruitment to the nucleus, possibly to provide a reserve of GCK that can be quickly released in the cytoplasm after a meal. The affinity of GCKR for GCK is modulated by fructose metabolites: GCKR with bound fructose 6-phosphate has increased affinity for GCK, while GCKR with bound fructose 1-phosphate has strongly decreased affinity for GCK and does not inhibit GCK activity. The chain is Glucokinase regulatory protein from Mus musculus (Mouse).